A 138-amino-acid polypeptide reads, in one-letter code: Cysteine desulfuration protein SufE (138 aa).

The active-site Cysteine persulfide intermediate is Cys-51.

This sequence belongs to the SufE family. As to quaternary structure, homodimer. Interacts with SufS.

It localises to the cytoplasm. Its pathway is cofactor biosynthesis; iron-sulfur cluster biosynthesis. Its function is as follows. Participates in cysteine desulfuration mediated by SufS. Cysteine desulfuration mobilizes sulfur from L-cysteine to yield L-alanine and constitutes an essential step in sulfur metabolism for biosynthesis of a variety of sulfur-containing biomolecules. Functions as a sulfur acceptor for SufS, by mediating the direct transfer of the sulfur atom from the S-sulfanylcysteine of SufS, an intermediate product of cysteine desulfuration process. The polypeptide is Cysteine desulfuration protein SufE (Salmonella choleraesuis (strain SC-B67)).